The chain runs to 128 residues: Protein C10 (128 aa).

Belongs to the UPF0456 family.

It is found in the cytoplasm. The chain is Protein C10 from Xenopus laevis (African clawed frog).